The sequence spans 165 residues: Large ribosomal subunit protein uL10 (165 aa).

This sequence belongs to the universal ribosomal protein uL10 family. As to quaternary structure, part of the ribosomal stalk of the 50S ribosomal subunit. The N-terminus interacts with L11 and the large rRNA to form the base of the stalk. The C-terminus forms an elongated spine to which L12 dimers bind in a sequential fashion forming a multimeric L10(L12)X complex.

In terms of biological role, forms part of the ribosomal stalk, playing a central role in the interaction of the ribosome with GTP-bound translation factors. This chain is Large ribosomal subunit protein uL10, found in Yersinia pseudotuberculosis serotype IB (strain PB1/+).